The sequence spans 314 residues: DNA-directed RNA polymerase subunit alpha (314 aa).

Residues 1–228 (MAQYTIECVE…DQLRPLQEIT (228 aa)) form an alpha N-terminal domain (alpha-NTD) region. The segment at 241–314 (NTVGQVPIEE…SLPKDKPARS (74 aa)) is alpha C-terminal domain (alpha-CTD).

Belongs to the RNA polymerase alpha chain family. As to quaternary structure, in cyanobacteria the RNAP catalytic core is composed of 2 alpha, 1 beta, 1 beta', 1 gamma and 1 omega subunit. When a sigma factor is associated with the core the holoenzyme is formed, which can initiate transcription.

It carries out the reaction RNA(n) + a ribonucleoside 5'-triphosphate = RNA(n+1) + diphosphate. Functionally, DNA-dependent RNA polymerase catalyzes the transcription of DNA into RNA using the four ribonucleoside triphosphates as substrates. This Gloeobacter violaceus (strain ATCC 29082 / PCC 7421) protein is DNA-directed RNA polymerase subunit alpha.